The following is a 504-amino-acid chain: GTPase Der (504 aa).

One can recognise an EngA-type G 1 domain in the interval 4 to 168; it reads PVVALVGRPN…QVLAPFAEKM (165 aa). Residues 10–17, 57–61, and 120–123 contribute to the GTP site; these read GRPNVGKS, DTGGI, and NKTD. The span at 168 to 179 shows a compositional bias: basic and acidic residues; sequence MENADENDRTSE. A disordered region spans residues 168–191; sequence MENADENDRTSEEEQDEWEQEFDF. Residues 180–191 are compositionally biased toward acidic residues; it reads EEQDEWEQEFDF. In terms of domain architecture, EngA-type G 2 spans 216–389; the sequence is IKIAIVGRPN…SIKEAYACAT (174 aa). Residues 222-229, 269-273, and 334-337 each bind GTP; these read GRPNVGKS, DTAGV, and NKWD. Positions 390-474 constitute a KH-like domain; it reads QKMTTSLLTR…PIRLLFQEGS (85 aa).

The protein belongs to the TRAFAC class TrmE-Era-EngA-EngB-Septin-like GTPase superfamily. EngA (Der) GTPase family. In terms of assembly, associates with the 50S ribosomal subunit.

Its function is as follows. GTPase that plays an essential role in the late steps of ribosome biogenesis. In Haemophilus influenzae (strain ATCC 51907 / DSM 11121 / KW20 / Rd), this protein is GTPase Der.